The following is a 517-amino-acid chain: Crotonobetaine/carnitine--CoA ligase (517 aa).

Belongs to the ATP-dependent AMP-binding enzyme family.

It catalyses the reaction 4-(trimethylamino)butanoate + ATP + CoA = 4-(trimethylamino)butanoyl-CoA + AMP + diphosphate. The catalysed reaction is crotonobetaine + ATP + CoA = crotonobetainyl-CoA + AMP + diphosphate. It carries out the reaction (R)-carnitine + ATP + CoA = (R)-carnitinyl-CoA + AMP + diphosphate. Its pathway is amine and polyamine metabolism; carnitine metabolism. Its function is as follows. Catalyzes the transfer of CoA to carnitine, generating the initial carnitinyl-CoA needed for the CaiB reaction cycle. Also has activity toward crotonobetaine and gamma-butyrobetaine. The protein is Crotonobetaine/carnitine--CoA ligase of Escherichia coli O17:K52:H18 (strain UMN026 / ExPEC).